Consider the following 239-residue polypeptide: Large ribosomal subunit protein uL30 (239 aa).

The tract at residues 1-22 (MEGVMSEAPQSSIRKKEYEARM) is disordered.

It belongs to the universal ribosomal protein uL30 family.

The sequence is that of Large ribosomal subunit protein uL30 (RPL7) from Encephalitozoon cuniculi (strain GB-M1) (Microsporidian parasite).